The chain runs to 976 residues: Terminal uridylyltransferase 1 (976 aa).

Disordered regions lie at residues 1–47 (MVSK…DADF) and 129–185 (TGRS…TTEG). Positions 1-188 (MVSKYHRLLQ…EDDTTEGPRG (188 aa)) are required for oligomerization and may contribute to the incorporation into the MPsome complex. A compositionally biased stretch (acidic residues) spans 147 to 183 (ADDESDGNLDTDGSDASEGDEVESTTDADVYGEDDTT). The C2H2-type; atypical zinc finger occupies 190-221 (VRLYSCDACPHAVFTTHAALLAHAEEHHADLL). 4 residues coordinate Zn(2+): Cys195, Cys198, His212, and His217. Residues Ser298 and 309–312 (ADID) each bind UTP. Mg(2+)-binding residues include Asp310 and Asp312. RNA is bound at residue Arg358. One can recognise a PAP-associated domain in the interval 366–425 (ASSPILTVARRDAEDVVARSIRFILNGPATREDRLLLEGSVRDAVGPTGVQQVWWNRTSD). Residues 480 to 484 (GIRNS), Lys505, Lys509, and 523 to 524 (SY) each bind UTP. The Nucleotide recognition motif (NRM) motif lies at 652 to 661 (IEDPYEENLN). The tract at residues 700–976 (DSSGTPAAGG…SKVTPFKSPR (277 aa)) is important for catalytic activity and RNA binding. The disordered stretch occupies residues 732–755 (SESRRLPQSNSDNSGRIANGDNES).

The protein belongs to the DNA polymerase type-B-like family. Oligomer. Component of the mitochondrial 3' processome (MPsome) complex composed at least of terminal uridylyltransferase KRET1/TUT1, 3'-5' exonuclease DSS1, MPSS1, MPSS2 and MPSS3. Within the complex, interacts with DSS1, MPSS1 and MPSS3. Mg(2+) serves as cofactor. The cofactor is Mn(2+).

The protein resides in the mitochondrion. It carries out the reaction RNA(n) + UTP = RNA(n)-3'-uridine ribonucleotide + diphosphate. Its function is as follows. Terminal uridylyltransferase which is involved in the post-transcriptional editing of mitochondrial RNA, a process involving the addition and deletion of uridine (U) nucleotides in the pre-RNA. Specifically, catalyzes the addition of Us to the 3'-hydroxyl group of guided RNA (gRNA), ribosomal RNA (rRNA) and some mRNAs. As part of the mitochondrial 3' processome (MPsome), catalyzes the primary 3' uridylation of gRNA precursors to facilitate their recognition and to induce their processive 3'-5' degradation by DSS1, and the secondary 3' uridylation of mature gRNAs. Involved in the 3' uridylylation of the long A/U tail of some edited and never-edited mRNAs. Promotes 3' uridylylation-mediated decay of some never-edited mRNAs. Does not mediate RNA-independent UTP polymerization. The chain is Terminal uridylyltransferase 1 from Trypanosoma brucei brucei.